Reading from the N-terminus, the 109-residue chain is Putative RNase MJ1380 (109 aa).

Catalysis depends on residues arginine 76 and histidine 81. Residues 76-83 carry the RX(4)HXY motif motif; it reads RNILIHKY. Tyrosine 83 bears the O-di-AMP-tyrosine mark.

Belongs to the HepT RNase toxin family. Homodimer, probably forms a complex with cognate antitoxin MJ1379. In terms of processing, modified by cognate antitoxin MJ1379; probably at least 2 successive AMPylation events occur on Tyr-83.

Functionally, probable toxic component of a putative type VII toxin-antitoxin (TA) system, probably an RNase. Probably neutralized by cognate antitoxin MJ1379. Neutralization may be due to AMPylation by antitoxin MJ1379. The protein is Putative RNase MJ1380 of Methanocaldococcus jannaschii (strain ATCC 43067 / DSM 2661 / JAL-1 / JCM 10045 / NBRC 100440) (Methanococcus jannaschii).